A 98-amino-acid polypeptide reads, in one-letter code: MPRIVNPLDEMLFKEVLKEQQRIRVYTERARYGKIKTIIEGIDEKEFDLEEIAKKLKAKLACGGTAKNGRIELQGDHRDRIKKLLVELGFSEELIEVE.

Belongs to the SUI1 family.

The polypeptide is Protein translation factor SUI1 homolog (Pyrococcus furiosus (strain ATCC 43587 / DSM 3638 / JCM 8422 / Vc1)).